Consider the following 210-residue polypeptide: Ribosomal RNA small subunit methyltransferase G (210 aa).

Residues Gly74, Phe79, 127–128 (IE), and Arg143 contribute to the S-adenosyl-L-methionine site.

This sequence belongs to the methyltransferase superfamily. RNA methyltransferase RsmG family.

The protein localises to the cytoplasm. It carries out the reaction guanosine(527) in 16S rRNA + S-adenosyl-L-methionine = N(7)-methylguanosine(527) in 16S rRNA + S-adenosyl-L-homocysteine. Its function is as follows. Specifically methylates the N7 position of guanine in position 527 of 16S rRNA. The polypeptide is Ribosomal RNA small subunit methyltransferase G (Chelativorans sp. (strain BNC1)).